The primary structure comprises 233 residues: Small ribosomal subunit protein uS5 (233 aa).

Positions Met1 to Ser13 are enriched in polar residues. The interval Met1–Asn40 is disordered. A compositionally biased stretch (basic and acidic residues) spans Asn15 to Asn40. Residues Leu45–Val108 form the S5 DRBM domain.

This sequence belongs to the universal ribosomal protein uS5 family. As to quaternary structure, part of the 30S ribosomal subunit. Contacts proteins S4 and S8.

Functionally, with S4 and S12 plays an important role in translational accuracy. Its function is as follows. Located at the back of the 30S subunit body where it stabilizes the conformation of the head with respect to the body. In Bifidobacterium longum (strain NCC 2705), this protein is Small ribosomal subunit protein uS5.